We begin with the raw amino-acid sequence, 352 residues long: C-C chemokine receptor type 5 (352 aa).

Over 1 to 30 the chain is Extracellular; sequence MDYQVSSPIYDIDYGPSEPCRKIDVKQMGA. Tyr3 carries the post-translational modification Sulfotyrosine. O-linked (GalNAc...) serine glycosylation is found at Ser6 and Ser7. Residues Tyr10 and Tyr14 each carry the sulfotyrosine modification. Disulfide bonds link Cys20–Cys269 and Cys101–Cys178. Residues 31–58 form a helical membrane-spanning segment; the sequence is HLLPPLYSMVFLFGFVGNMLVVLILINC. Over 59–68 the chain is Cytoplasmic; sequence KRLKSMTDIY. Residues 69 to 89 form a helical membrane-spanning segment; sequence LLNLAISDLIFLFTVPFWAHY. Over 90-102 the chain is Extracellular; sequence AAGQWDFGNTMCQ. The chain crosses the membrane as a helical span at residues 103 to 124; sequence FLTGLYFIGFFSGIFFIILLTI. Residues 125-141 are Cytoplasmic-facing; the sequence is DRYLAIVHAVFALKART. A helical membrane pass occupies residues 142–166; that stretch reads VTFGVVTSVITWVVAVFASLPGIIF. Over 167–198 the chain is Extracellular; that stretch reads TRSQKEGYHYTCSPHFPFSQYQFWKNFETLKM. The helical transmembrane segment at 199-218 threads the bilayer; it reads VILGLVLPLLVMVICYSGIL. Over 219 to 235 the chain is Cytoplasmic; sequence KTLLRCRNEKKRHRAVR. A helical membrane pass occupies residues 236–260; that stretch reads LIFTIMIVYFLFWAPYNIVLLLNTY. Over 261 to 277 the chain is Extracellular; it reads QEFFGLNNCSSSNRLDQ. Residues 278–301 traverse the membrane as a helical segment; the sequence is AMQVTETLGMTHCCVNPIIYAFVG. The Cytoplasmic segment spans residues 302-352; that stretch reads EKFRNYLKVFFQKHIAKCFCECCSIFQKEAPERANSVYTRSTGEQEISVGL. 3 S-palmitoyl cysteine lipidation sites follow: Cys321, Cys323, and Cys324. A phosphoserine; by BARK1 mark is found at Ser337, Ser342, and Ser349.

This sequence belongs to the G-protein coupled receptor 1 family. As to quaternary structure, interacts with PRAF2. Efficient ligand binding to CCL3/MIP-1alpha and CCL4/MIP-1beta requires sulfation, O-glycosylation and sialic acid modifications. Glycosylation on Ser-6 is required for efficient binding of CCL4. Interacts with GRK2. Interacts with ARRB1 and ARRB2. Interacts with CNIH4. Interacts with S100A4; this interaction stimulates T-lymphocyte chemotaxis. In terms of processing, sulfated on at least 2 of the N-terminal tyrosines. Sulfation is required for efficient binding of the chemokines, CCL3 and CCL4. Palmitoylation in the C-terminal is important for cell surface expression. Post-translationally, phosphorylation on serine residues in the C-terminal is stimulated by binding CC chemokines especially by APO-RANTES. In terms of processing, O-glycosylated, but not N-glycosylated. Ser-6 appears to be the major site even if Ser-7 may be also O-glycosylated. Also sialylated glycans present which contribute to chemokine binding. Ser-17 may also be glycosylated and, if so, with small moieties such as a T-antigen.

It is found in the cell membrane. Receptor for a number of inflammatory CC-chemokines including CCL3/MIP-1-alpha, CCL4/MIP-1-beta and RANTES and subsequently transduces a signal by increasing the intracellular calcium ion level. May play a role in the control of granulocytic lineage proliferation or differentiation. Participates in T-lymphocyte migration to the infection site by acting as a chemotactic receptor. This Mico humeralifer (Black and white tassel-ear marmoset) protein is C-C chemokine receptor type 5 (CCR5).